The chain runs to 267 residues: Glutamate racemase (267 aa).

Substrate contacts are provided by residues 13 to 14 (DS) and 45 to 46 (YG). Catalysis depends on cysteine 77, which acts as the Proton donor/acceptor. 78–79 (NT) contacts substrate. The Proton donor/acceptor role is filled by cysteine 192. Position 193–194 (193–194 (TH)) interacts with substrate.

This sequence belongs to the aspartate/glutamate racemases family.

The enzyme catalyses L-glutamate = D-glutamate. The protein operates within cell wall biogenesis; peptidoglycan biosynthesis. Functionally, provides the (R)-glutamate required for cell wall biosynthesis. The protein is Glutamate racemase of Sinorhizobium fredii (strain NBRC 101917 / NGR234).